Reading from the N-terminus, the 700-residue chain is MAQQVLGCTSRPIRVSLHRCSVITTSDTIRRKNLRFVRNPRLSFSLQSSTRNYRLPSINCSTVNGAVAETAEYYEGEGDNVSLAEKIRQCIDFLRTILPGGSWWSFSDEVDGRFIAKPVTVWRALSRMWELVAEDRWVIFAAFSTLIVAALSEITIPHFLTASIFSAQSGDIAVFHRNVKLLVTLCVTSGICSGIRGCFFGIANMILVKRMRETLYSTLLFQDISFFDSQTVGDLTSRLGSDCQQVSRVIGNDLNMIFRNVLQGTGALIYLLILSWPLGLCTLVICCILAAVMFVYGMYQKKTAKLIQEITASANEVAQETYSLMRTVRVYGTEKQEFKRYNHWLQRLADISLRQSAAYGIWNWSFNTLYHATQIIAVLVGGLSILAGQITAEQLTKFLLYSEWLIYATWWVGDNLSSLMQSVGASEKVFQMMDLKPSDQFISKGTRLQRLTGHIEFVDVSFSYPSRDEVAVVQNVNISVHPGEVVAIVGLSGSGKSTLVNLLLQLYEPTSGQILLDGVPLKELDVKWLRQRIGYVGQEPKLFRTDISSNIKYGCDRNISQEDIISAAKQAYAHDFITALPNGYNTIVDDDLLSGGQKQRIAIARAILRDPRILILDEATSALDAESEHNVKGVLRSIGNDSATKRSVIVIAHRLSTIQAADRIVAMDSGRVVEMGSHKELLSKDGLYARLTKRQNDAVL.

The transit peptide at 1–59 (MAQQVLGCTSRPIRVSLHRCSVITTSDTIRRKNLRFVRNPRLSFSLQSSTRNYRLPSIN) directs the protein to the chloroplast. Transmembrane regions (helical) follow at residues 137 to 157 (WVIF…ITIP), 182 to 202 (LVTL…FFGI), and 268 to 288 (LIYL…ICCI). The region spanning 139 to 421 (IFAAFSTLIV…VGDNLSSLMQ (283 aa)) is the ABC transmembrane type-1 domain. An ABC transporter domain is found at 455-694 (IEFVDVSFSY…DGLYARLTKR (240 aa)). 490-497 (GLSGSGKS) is a binding site for ATP.

It belongs to the ABC transporter superfamily. ABCB family. Multidrug resistance exporter (TC 3.A.1.201) subfamily.

Its subcellular location is the plastid. It localises to the chloroplast membrane. This is ABC transporter B family member 26, chloroplastic (ABCB26) from Arabidopsis thaliana (Mouse-ear cress).